Here is a 255-residue protein sequence, read N- to C-terminus: Homeobox-leucine zipper protein ATHB-23 (255 aa).

The segment at residues 68 to 127 (MGEKKRRLNMEQLKALEKDFELGNKLESDRKLELARALGLQPRQIAIWFQNRRARSKTKQ) is a DNA-binding region (homeobox). Residues 128–163 (LEKDYDMLKRQFESLRDENEVLQTQNQKLQAQVMAL) are leucine-zipper.

Belongs to the HD-ZIP homeobox family. Class I subfamily. Expressed in young leaves, in the adaxial domain of leaf primordia and the rib meristem. Expressed in the styles of flowers and siliques.

The protein localises to the nucleus. Functionally, probable transcription factor. The polypeptide is Homeobox-leucine zipper protein ATHB-23 (ATHB-23) (Arabidopsis thaliana (Mouse-ear cress)).